Consider the following 313-residue polypeptide: Metal ABC transporter substrate-binding lipoprotein (313 aa).

Positions 1–23 are cleaved as a signal peptide; sequence MIEKYKNILITFIALAAIVFLVG. Cysteine 24 carries N-palmitoyl cysteine lipidation. Residue cysteine 24 is the site of S-diacylglycerol cysteine attachment. 4 residues coordinate Zn(2+): histidine 71, histidine 143, glutamate 209, and aspartate 284.

It belongs to the bacterial solute-binding protein 9 family. Lipoprotein receptor antigen (Lrai) subfamily.

Its subcellular location is the cell membrane. Functionally, part of an ATP-driven transport system for a metal; probably for manganese. This chain is Metal ABC transporter substrate-binding lipoprotein (mtsA), found in Lactococcus lactis subsp. lactis (strain IL1403) (Streptococcus lactis).